The following is a 276-amino-acid chain: Small ribosomal subunit protein uS2 (276 aa).

It belongs to the universal ribosomal protein uS2 family.

The protein is Small ribosomal subunit protein uS2 of Chlamydia caviae (strain ATCC VR-813 / DSM 19441 / 03DC25 / GPIC) (Chlamydophila caviae).